The primary structure comprises 29 residues: Myosin heavy chain, muscle (29 aa).

The segment covering 1–16 (SKYESEGVARSEELQE) has biased composition (basic and acidic residues). The disordered stretch occupies residues 1–29 (SKYESEGVARSEELQEVHQAFADAGRKPI).

In terms of assembly, muscle myosin is a hexameric protein that consists of 2 heavy chain subunits (MHC), 2 alkali light chain subunits (MLC) and 2 regulatory light chain subunits (MLC-2).

The protein localises to the cytoplasm. Its subcellular location is the myofibril. Its function is as follows. Muscle contraction. This is Myosin heavy chain, muscle from Bombyx mori (Silk moth).